Reading from the N-terminus, the 87-residue chain is Small ribosomal subunit protein uS17 (87 aa).

The protein belongs to the universal ribosomal protein uS17 family. As to quaternary structure, part of the 30S ribosomal subunit.

Functionally, one of the primary rRNA binding proteins, it binds specifically to the 5'-end of 16S ribosomal RNA. The chain is Small ribosomal subunit protein uS17 from Staphylococcus aureus (strain Mu3 / ATCC 700698).